The chain runs to 287 residues: Glucose uptake protein GlcU (287 aa).

A run of 8 helical transmembrane segments spans residues Leu-4–Gly-26, Ala-38–Val-60, Trp-110–Leu-132, Ile-153–Val-175, Ala-180–Tyr-197, Ile-210–Gln-227, Val-232–Leu-254, and Arg-261–Ala-283.

It belongs to the GRP transporter (TC 2.A.7.5) family.

Its subcellular location is the cell membrane. Its function is as follows. Involved in the uptake of glucose. This is Glucose uptake protein GlcU (glcU) from Bacillus subtilis (strain 168).